Consider the following 411-residue polypeptide: Peptidase T (411 aa).

Position 79 (H79) interacts with Zn(2+). The active site involves D81. Position 142 (D142) interacts with Zn(2+). Residue E176 is the Proton acceptor of the active site. Zn(2+) is bound by residues E177, D199, and H381.

The protein belongs to the peptidase M20B family. The cofactor is Zn(2+).

The protein localises to the cytoplasm. The catalysed reaction is Release of the N-terminal residue from a tripeptide.. Functionally, cleaves the N-terminal amino acid of tripeptides. This is Peptidase T from Exiguobacterium sibiricum (strain DSM 17290 / CCUG 55495 / CIP 109462 / JCM 13490 / 255-15).